Reading from the N-terminus, the 63-residue chain is Translational regulator CsrA (63 aa).

The protein belongs to the CsrA/RsmA family. As to quaternary structure, homodimer; the beta-strands of each monomer intercalate to form a hydrophobic core, while the alpha-helices form wings that extend away from the core.

The protein localises to the cytoplasm. In terms of biological role, a key translational regulator that binds mRNA to regulate translation initiation and/or mRNA stability. Mediates global changes in gene expression, shifting from rapid growth to stress survival by linking envelope stress, the stringent response and the catabolite repression systems. Usually binds in the 5'-UTR; binding at or near the Shine-Dalgarno sequence prevents ribosome-binding, repressing translation, binding elsewhere in the 5'-UTR can activate translation and/or stabilize the mRNA. Its function is antagonized by small RNA(s). The protein is Translational regulator CsrA of Haemophilus influenzae (strain PittEE).